The primary structure comprises 518 residues: Protein FAM98A (518 aa).

2 disordered regions span residues G300–S415 and G434–S518. Positions V302–E311 are enriched in basic and acidic residues. 3 stretches are compositionally biased toward gly residues: residues G349–G364, W383–D396, and Q405–S415. Positions R447 to G459 are enriched in basic and acidic residues. A compositionally biased stretch (gly residues) spans G460–G484. The span at Y488–Q504 shows a compositional bias: low complexity. Positions Y505–S518 are enriched in polar residues.

This sequence belongs to the FAM98 family. As to quaternary structure, interacts (via N- and C-terminus) with DDX1. Interacts (via N- and C-terminus) with C14orf166. Interacts with FAM98B. Interacts with PLEKHM1 (via N- and C-terminus).

Its function is as follows. Positively stimulates PRMT1-induced protein arginine methylation. Involved in skeletal homeostasis. Positively regulates lysosome peripheral distribution and ruffled border formation in osteoclasts. This Pongo abelii (Sumatran orangutan) protein is Protein FAM98A.